A 355-amino-acid polypeptide reads, in one-letter code: Countin-like protein (355 aa).

Positions 1-27 are cleaved as a signal peptide; that stretch reads MNKSLFSLILLIITIFNLASNINIVSA. The interval 63–83 is disordered; sequence NNHEDNNNNNNNNNNNNNAYN. Positions 69–83 are enriched in low complexity; sequence NNNNNNNNNNNNAYN. One can recognise a Saposin B-type domain in the interval 93–177; sequence GDIECVVCLD…ELITACSTPK (85 aa). Disulfide bonds link Cys-97/Cys-173, Cys-100/Cys-167, and Cys-128/Cys-140. Asn-132, Asn-209, Asn-242, Asn-253, Asn-254, Asn-282, and Asn-303 each carry an N-linked (GlcNAc...) asparagine glycan. A disordered region spans residues 290–355; it reads ISNPTPTPTP…SSHYKNKINK (66 aa). A compositionally biased stretch (low complexity) spans 301 to 342; that stretch reads PSNSTTPTPTPTNSTPTPTSTSTPTSTPTSTPTPTPTSSSST. The span at 345-355 shows a compositional bias: basic residues; the sequence is HSSHYKNKINK.

It belongs to the countin family.

It is found in the secreted. The sequence is that of Countin-like protein from Dictyostelium discoideum (Social amoeba).